Consider the following 236-residue polypeptide: MKFEQPLQSATLLKRYKRFLADVVTANGEEFTLHCANTGAMTGCATPGDTVWYSTSSNVKRKYPHSWELTQTQSGDWICINTLRANTIIADAIEAGDIPELSDYDEIRREVKYGSENSRIDILLKSNHKVDCYIEVKSVTLLDAGMGYFPDAKTERGQKHLRELTAIAKSGLRAILFYAVPHTGITQVSVAKEIDPKYDLLLKQACDAGVEILCYRINISEYDLTIGKQLPFISKG.

Belongs to the SfsA family.

In Proteus mirabilis (strain HI4320), this protein is Sugar fermentation stimulation protein homolog.